A 532-amino-acid chain; its full sequence is 2,3-bisphosphoglycerate-independent phosphoglycerate mutase (532 aa).

2 residues coordinate Mn(2+): Asp-15 and Ser-65. The Phosphoserine intermediate role is filled by Ser-65. Substrate contacts are provided by residues His-126, 156 to 157 (RD), Arg-188, Arg-194, 258 to 261 (RPDR), and Lys-331. 5 residues coordinate Mn(2+): Asp-398, His-402, Asp-439, His-440, and His-457.

It belongs to the BPG-independent phosphoglycerate mutase family. Monomer. Requires Mn(2+) as cofactor.

The enzyme catalyses (2R)-2-phosphoglycerate = (2R)-3-phosphoglycerate. It functions in the pathway carbohydrate degradation; glycolysis; pyruvate from D-glyceraldehyde 3-phosphate: step 3/5. Catalyzes the interconversion of 2-phosphoglycerate and 3-phosphoglycerate. The polypeptide is 2,3-bisphosphoglycerate-independent phosphoglycerate mutase (Synechococcus elongatus (strain ATCC 33912 / PCC 7942 / FACHB-805) (Anacystis nidulans R2)).